Reading from the N-terminus, the 298-residue chain is HTH-type transcriptional regulator ArgP (298 aa).

The HTH lysR-type domain occupies 4-60 (LDYRWIEALDSVVSKGSFERAAEQLFISQSAVSQRIKQLEKYLAQPVLIREQPPRPT). The segment at residues 21–40 (FERAAEQLFISQSAVSQRIK) is a DNA-binding region (H-T-H motif).

The protein belongs to the LysR transcriptional regulatory family. In terms of assembly, homodimer.

Functionally, controls the transcription of genes involved in arginine and lysine metabolism. The chain is HTH-type transcriptional regulator ArgP from Vibrio cholerae serotype O1 (strain ATCC 39541 / Classical Ogawa 395 / O395).